The primary structure comprises 360 residues: Fructose import permease protein FrcC (360 aa).

9 consecutive transmembrane segments (helical) span residues 48–68 (AAVPLIVLVLSLIAFGVILGG), 84–106 (AIVGIVGAAQTLVILTAGIDLSV), 125–145 (GFPPALSVICGLGVGALCGYI), 155–175 (LPPFIVTLGMWQIVLASNFLY), 205–225 (AVFTYGVVVMVLLVCLLWYVL), 254–274 (MLISIYTLSGLICALAGWALI), 284–304 (AGQFANIESITAVVIGGISLF), 310–330 (IMGMLFGALIVGVFSLGLRLM), and 335–355 (QWTYLLIGLLIIIAVAIDQWI).

This sequence belongs to the binding-protein-dependent transport system permease family. As to quaternary structure, the complex is composed of two ATP-binding proteins (FrcA), two transmembrane proteins (FrcC) and a solute-binding protein (FrcB).

The protein localises to the cell inner membrane. In terms of biological role, part of the high-affinity ABC transporter complex FrcBCA involved in fructose uptake. Is also a high-affinity transporter for ribose and mannose. Responsible for the translocation of the substrate across the membrane. This is Fructose import permease protein FrcC from Rhizobium meliloti (Ensifer meliloti).